We begin with the raw amino-acid sequence, 101 residues long: Urease subunit beta (101 aa).

It belongs to the urease beta subunit family. In terms of assembly, heterotrimer of UreA (gamma), UreB (beta) and UreC (alpha) subunits. Three heterotrimers associate to form the active enzyme.

The protein localises to the cytoplasm. It carries out the reaction urea + 2 H2O + H(+) = hydrogencarbonate + 2 NH4(+). Its pathway is nitrogen metabolism; urea degradation; CO(2) and NH(3) from urea (urease route): step 1/1. The polypeptide is Urease subunit beta (Rhodopseudomonas palustris (strain HaA2)).